Consider the following 627-residue polypeptide: Altered inheritance of mitochondria protein 9, mitochondrial (627 aa).

The N-terminal 43 residues, 1-43, are a transit peptide targeting the mitochondrion; it reads MIRYTVAGHSRRCVVGASKRVGAIKCITVAATKRFISNKPNEV.

It belongs to the AIM9 family.

It localises to the mitochondrion. The sequence is that of Altered inheritance of mitochondria protein 9, mitochondrial (AIM9) from Saccharomyces cerevisiae (strain YJM789) (Baker's yeast).